A 595-amino-acid polypeptide reads, in one-letter code: Inactive glycosyltransferase 25 family member 3 (595 aa).

A signal peptide spans 1–22 (MRAARAAPLLQLLLLLGPWLEA). N-linked (GlcNAc...) asparagine glycans are attached at residues Asn75, Asn153, Asn237, and Asn360. The disordered stretch occupies residues 548–595 (DTETSSPWDDDSGRLISWSGSQKTLRSPRLDLTGSSGHSLQPQPRDEL). Polar residues predominate over residues 580–589 (TGSSGHSLQP). Positions 592 to 595 (RDEL) match the Prevents secretion from ER motif.

The protein belongs to the glycosyltransferase 25 family. Ubiquitous. Highly expressed in secretory and nervous tissues.

The protein resides in the endoplasmic reticulum lumen. Its function is as follows. Probable cell adhesion protein involved in leukocyte transmigration across the blood-brain barrier. Does not express any beta-galactosyltransferase activity in vitro. The polypeptide is Inactive glycosyltransferase 25 family member 3 (CERCAM) (Homo sapiens (Human)).